A 350-amino-acid chain; its full sequence is Nicotinate-nucleotide--dimethylbenzimidazole phosphoribosyltransferase (350 aa).

The Proton acceptor role is filled by Glu-318.

Belongs to the CobT family.

The enzyme catalyses 5,6-dimethylbenzimidazole + nicotinate beta-D-ribonucleotide = alpha-ribazole 5'-phosphate + nicotinate + H(+). The protein operates within nucleoside biosynthesis; alpha-ribazole biosynthesis; alpha-ribazole from 5,6-dimethylbenzimidazole: step 1/2. Its function is as follows. Catalyzes the synthesis of alpha-ribazole-5'-phosphate from nicotinate mononucleotide (NAMN) and 5,6-dimethylbenzimidazole (DMB). The chain is Nicotinate-nucleotide--dimethylbenzimidazole phosphoribosyltransferase from Citrifermentans bemidjiense (strain ATCC BAA-1014 / DSM 16622 / JCM 12645 / Bem) (Geobacter bemidjiensis).